A 92-amino-acid chain; its full sequence is Protein S100-B (92 aa).

At Ser2 the chain carries N-acetylserine. EF-hand domains follow at residues 13-48 (DVFH…LEEI) and 49-84 (KEQE…VTTA). His16 provides a ligand contact to Zn(2+). 2 residues coordinate Ca(2+): Ser19 and Glu22. His26 is a binding site for Zn(2+). Ca(2+) contacts are provided by Lys27, Glu32, Asp62, Asp64, Asp66, Glu68, and Glu73. Residues His86 and His91 each contribute to the Zn(2+) site.

Belongs to the S-100 family. Dimer of either two alpha chains, or two beta chains, or one alpha and one beta chain. The S100B dimer binds two molecules of STK38. Interacts with CACYBP in a calcium-dependent manner. Interacts with ATAD3A; this interaction probably occurs in the cytosol prior to ATAD3A mitochondrial targeting. Interacts with S100A6. The S100B dimer interacts with two molecules of CAPZA1. Interacts with AGER. Interacts with PPP5C (via TPR repeats); the interaction is calcium-dependent and modulates PPP5C activity. Interacts with TPPP; this interaction inhibits TPPP dimerization. Interacts with isoform CLSTN3beta of CLSTN3; interaction promotes secretion. Although predominant among the water-soluble brain proteins, S100 is also found in a variety of other tissues.

The protein localises to the cytoplasm. It is found in the nucleus. It localises to the secreted. Its function is as follows. Small zinc- and- and calcium-binding protein that is highly expressed in astrocytes and constitutes one of the most abundant soluble proteins in brain. Weakly binds calcium but binds zinc very tightly-distinct binding sites with different affinities exist for both ions on each monomer. Physiological concentrations of potassium ion antagonize the binding of both divalent cations, especially affecting high-affinity calcium-binding sites. Acts as a neurotrophic factor that promotes astrocytosis and axonal proliferation. Involved in innervation of thermogenic adipose tissue by acting as an adipocyte-derived neurotrophic factor that promotes sympathetic innervation of adipose tissue. Binds to and initiates the activation of STK38 by releasing autoinhibitory intramolecular interactions within the kinase. Interaction with AGER after myocardial infarction may play a role in myocyte apoptosis by activating ERK1/2 and p53/TP53 signaling. Could assist ATAD3A cytoplasmic processing, preventing aggregation and favoring mitochondrial localization. May mediate calcium-dependent regulation on many physiological processes by interacting with other proteins, such as TPR-containing proteins, and modulating their activity. This Rattus norvegicus (Rat) protein is Protein S100-B.